A 729-amino-acid chain; its full sequence is Translation initiation factor IF-2 (729 aa).

The tract at residues Q20 to P141 is disordered. Positions A22–G91 are enriched in gly residues. The segment covering G92–R108 has biased composition (basic and acidic residues). Over residues S112–G127 the composition is skewed to low complexity. The tr-type G domain occupies P229–E396. Residues G238–T245 form a G1 region. G238 to T245 is a GTP binding site. Residues G263–H267 are G2. The G3 stretch occupies residues D284–G287. GTP-binding positions include D284–H288 and N338–D341. A G4 region spans residues N338–D341. Residues S374–K376 are G5.

Belongs to the TRAFAC class translation factor GTPase superfamily. Classic translation factor GTPase family. IF-2 subfamily.

Its subcellular location is the cytoplasm. In terms of biological role, one of the essential components for the initiation of protein synthesis. Protects formylmethionyl-tRNA from spontaneous hydrolysis and promotes its binding to the 30S ribosomal subunits. Also involved in the hydrolysis of GTP during the formation of the 70S ribosomal complex. The chain is Translation initiation factor IF-2 from Roseiflexus sp. (strain RS-1).